The primary structure comprises 404 residues: MNTVDIGRCSKRIVQYLWDPEPRNDEDPNSSIWCLGIEYHPDKDANTRETPDKNNTRENVMGTTNYRKPSEHAWPESFLLDFESRIWMTYRSNFPPIPRVEGDDKSASMTLGVRLRSQLVDTQGFTSDTGWGCMIRSGQSLLANALSMLVLGRDWRRGARFEEESQLLSLFADTPTAPFSVHRFVKHGAESCGKYPGEWFGPSATAKCIEALSSQCGNPTLKVYVSNDTSEVYQDKFMDIARNTSGAFQPTLILLGTRLGIDNITPVYWDGLKAALQFPQSVGIAGGRPSASHYFVGAQGSHLFYLDPHYTRPALPDRQEGELYSKEEVDTYHTRRLRRIHVRDMDPSMLIGFLIRNQEDWADWLKRIEAVKGRPIIHVLKQMNPDHDQEAGALDQVEALDDIE.

Residue C133 is the Nucleophile of the active site. Active-site residues include D307 and H309.

It belongs to the peptidase C54 family.

The protein resides in the cytoplasm. Its subcellular location is the nucleus. It localises to the preautophagosomal structure. The catalysed reaction is [protein]-C-terminal L-amino acid-glycyl-phosphatidylethanolamide + H2O = [protein]-C-terminal L-amino acid-glycine + a 1,2-diacyl-sn-glycero-3-phosphoethanolamine. Its function is as follows. Cysteine protease that plays a key role in cytoplasm to vacuole transport (Cvt) and autophagy by mediating both proteolytic activation and delipidation of ATG8. Required for selective autophagic degradation of the nucleus (nucleophagy) as well as for mitophagy which contributes to regulate mitochondrial quantity and quality by eliminating the mitochondria to a basal level to fulfill cellular energy requirements and preventing excess ROS production. The protease activity is required for proteolytic activation of ATG8: cleaves the C-terminal amino acid of ATG8 to reveal a C-terminal glycine. ATG8 ubiquitin-like activity requires the exposure of the glycine at the C-terminus for its conjugation to phosphatidylethanolamine (PE) and its insertion to membranes, which is necessary for autophagy. The ATG8-PE conjugate mediates tethering between adjacent membranes and stimulates membrane hemifusion, leading to expansion of the autophagosomal membrane during autophagy. In addition to the protease activity, also catalyzes deconjugation of PE-conjugated forms of ATG8 during macroautophagy: ATG8 delipidation is required to release the protein from membranes, which facilitates multiple events during macroautophagy, and especially for efficient autophagosome biogenesis, the assembly of ATG9-containing tubulovesicular clusters into phagophores/autophagosomes, and for the disassembly of PAS-associated ATG components. ATG8 delipidation by ATG4 also recycles ATG8-PE generated on inappropriate membranes to maintain a reservoir of unlipidated ATG8 that is required for autophagosome formation at the PAS. This Aspergillus niger (strain ATCC MYA-4892 / CBS 513.88 / FGSC A1513) protein is Probable cysteine protease atg4 (atg4).